A 263-amino-acid chain; its full sequence is S-methyl-5'-thioadenosine phosphorylase (263 aa).

Phosphate contacts are provided by residues threonine 13, arginine 55–histidine 56, and serine 88–alanine 89. Substrate is bound at residue methionine 186. Threonine 187 serves as a coordination point for phosphate. Position 210–212 (aspartate 210–aspartate 212) interacts with substrate.

It belongs to the PNP/MTAP phosphorylase family. MTAP subfamily. In terms of assembly, homohexamer. Dimer of a homotrimer.

It catalyses the reaction S-methyl-5'-thioadenosine + phosphate = 5-(methylsulfanyl)-alpha-D-ribose 1-phosphate + adenine. It functions in the pathway amino-acid biosynthesis; L-methionine biosynthesis via salvage pathway; S-methyl-5-thio-alpha-D-ribose 1-phosphate from S-methyl-5'-thioadenosine (phosphorylase route): step 1/1. Catalyzes the reversible phosphorylation of S-methyl-5'-thioadenosine (MTA) to adenine and 5-methylthioribose-1-phosphate. Involved in the breakdown of MTA, a major by-product of polyamine biosynthesis. Responsible for the first step in the methionine salvage pathway after MTA has been generated from S-adenosylmethionine. Has broad substrate specificity with 6-aminopurine nucleosides as preferred substrates. The protein is S-methyl-5'-thioadenosine phosphorylase of Nitrosopumilus maritimus (strain SCM1).